A 132-amino-acid chain; its full sequence is Small ribosomal subunit protein uS8c (132 aa).

This sequence belongs to the universal ribosomal protein uS8 family. As to quaternary structure, part of the 30S ribosomal subunit.

The protein localises to the plastid. The protein resides in the chloroplast. In terms of biological role, one of the primary rRNA binding proteins, it binds directly to 16S rRNA central domain where it helps coordinate assembly of the platform of the 30S subunit. This Spirogyra maxima (Green alga) protein is Small ribosomal subunit protein uS8c (rps8).